The following is a 604-amino-acid chain: MIVRILLLFIALFTFGVQAQAIKESYAFAVLGEPRYAFNFNHFDYVNPAAPKGGQITLSALGTFDNFNRYALRGNPGARTEQLYDTLFTTSDDEPGSYYPLIAESARYADDYSWVEVAINPRARFHDGSPITARDVEFTFQKFMTEGVPQFRLVYKGTTVKAIAPLTVRIELAKPGKEDMLSLFSLPVFPEKYWKDHKLSDPLATPPLASGPYRVTSWKMGQNIVYSRVKDYWAANLPVNRGRWNFDTIRYDYYLDDNVAFEAFKAGAFDLRMENDAKNWATRYTGKNFDKKYIIKDEQKNESAQDTRWLAFNIQRPVFSDRRVREAITLAFDFEWMNKALFYNAWSRTNSYFQNTEYAARNYPDAAELVLLAPMKKDLPSEVFTQIYQPPVSKGDGYDRDNLLKADKLLNEAGWVLKGQQRVNATTGQPLSFELLLPASSNSQWVLPFQHSLQRLGINMDIRKVDNSQITNRMRSRDYDMMPRVWRAMPWPSSDLQISWSSEYINSTYNAPGVQSPVIDSLINQIIAAQGNKEKLLPLGRALDRVLTWNYYMLPMWYMAEDRLAWWDKFSQPAVRPIYSLGIDTWWYDVNKAAKLPSASKQGE.

The signal sequence occupies residues 1–19 (MIVRILLLFIALFTFGVQA).

This sequence to H.influenzae HbpA.

This is an uncharacterized protein from Escherichia coli (strain K12).